Reading from the N-terminus, the 1104-residue chain is Receptor-type guanylate cyclase gcy-15 (1104 aa).

The Extracellular segment spans residues 1-431; that stretch reads MEIAINRLNA…ENCGPPANNT (431 aa). N-linked (GlcNAc...) asparagine glycosylation is found at Asn43, Asn237, Asn263, Asn287, Asn407, and Asn429. A helical membrane pass occupies residues 432 to 452; sequence FIIVISVGVAVLIGLAIAAAF. The Cytoplasmic segment spans residues 453–1104; it reads LYKRYRYERR…QIQEKTYEFS (652 aa). The Protein kinase domain maps to 528–823; the sequence is FNTGSTARAG…QIKRKLKPLT (296 aa). ATP-binding positions include 534-542 and Lys576; that span reads ARAGPFGPI. Positions 838 to 871 form a coiled coil; that stretch reads IEKYTDKLEKDIAERNEELEAEKAKSEALLKMML. The region spanning 894 to 1024 is the Guanylate cyclase domain; sequence TVFFSDCPGF…DTVNTASRME (131 aa).

It belongs to the adenylyl cyclase class-4/guanylyl cyclase family. As to expression, expressed bilaterally in ASG sensory neurons.

The protein localises to the cell membrane. The catalysed reaction is GTP = 3',5'-cyclic GMP + diphosphate. In terms of biological role, guanylate cyclase involved in the production of the second messenger cGMP. The protein is Receptor-type guanylate cyclase gcy-15 of Caenorhabditis elegans.